The sequence spans 590 residues: MASVTSLTASVHQRLADALSAALPEAGSADPLLRRSDRADFQANGILALAKKAKANPRDLATQVVARVESGEVIKDIEVSGPGFLNITITDQAITRNLAARYEDGERLGVPLAEHPGTTVIDYAQPNVAKEMHVGHLRSAVIGDAVVQILEFTGENVVRRHHIGDWGTQFGMLIQYLIEHPHELDHKGAAEVSGEEAMSNLNRLYKAARTLFDSDEEFKTRARRRVVDLQAGEPETLAMWQKFVDESKIYFYSVFDKLDLEIRDPDVVGESGYNDMLDETCRLLEESGVAVRSDGALCVFFDDVKGPDGNPVPLIVKKSDGGYGYAATDLSAIRDRVFNLKANSLIYVVDARQSLHFKMVFETARRAGWLNDDVQAQQLAFGTVLGKDGKPFKTREGETIRLVDLLDEAIDRATAVVREKAEKVGLSEQEIEENGRYVGIGAVKYADLSTSAVRDYKFDLDQMVSLNGDTSVYLQYAYARIRSIFGKAGDRTPLAHPELELAPAERALGLHLDRFGETLDEVAAEYAPHKLAAYLYQLASLYTTFYDQCPVIKPAPAQEVAENRLFLCDLTARTLHQGMALLGIRTPERL.

A 'HIGH' region motif is present at residues 126 to 136 (PNVAKEMHVGH).

This sequence belongs to the class-I aminoacyl-tRNA synthetase family. As to quaternary structure, monomer.

The protein resides in the cytoplasm. It catalyses the reaction tRNA(Arg) + L-arginine + ATP = L-arginyl-tRNA(Arg) + AMP + diphosphate. The sequence is that of Arginine--tRNA ligase from Streptomyces avermitilis (strain ATCC 31267 / DSM 46492 / JCM 5070 / NBRC 14893 / NCIMB 12804 / NRRL 8165 / MA-4680).